We begin with the raw amino-acid sequence, 321 residues long: Probable pectate lyase A (321 aa).

The first 18 residues, 1 to 18, serve as a signal peptide directing secretion; sequence MKFVATLIACGLSGLALA. Asn93 carries N-linked (GlcNAc...) asparagine glycosylation. Ca(2+) contacts are provided by Asp134, Asp163, and Asp167. Arg220 is an active-site residue. The N-linked (GlcNAc...) asparagine glycan is linked to Asn238.

It belongs to the polysaccharide lyase 1 family. Ca(2+) serves as cofactor.

It localises to the secreted. The enzyme catalyses Eliminative cleavage of (1-&gt;4)-alpha-D-galacturonan to give oligosaccharides with 4-deoxy-alpha-D-galact-4-enuronosyl groups at their non-reducing ends.. Pectinolytic enzyme consist of four classes of enzymes: pectin lyase, polygalacturonase, pectin methylesterase and rhamnogalacturonase. Among pectinolytic enzymes, pectin lyase is the most important in depolymerization of pectin, since it cleaves internal glycosidic bonds of highly methylated pectins. Favors pectate, the anion, over pectin, the methyl ester. The chain is Probable pectate lyase A (plyA) from Aspergillus fumigatus (strain CBS 144.89 / FGSC A1163 / CEA10) (Neosartorya fumigata).